An 819-amino-acid polypeptide reads, in one-letter code: Ferric-pyoverdine 358 receptor (819 aa).

The signal sequence occupies residues 1 to 47 (MSKPLPSALNPLAKALLIRHSLRPRHALSRIGMGLALSSALVFQVQA). Residues 115–122 (NTVTVTAS) carry the TonB box motif. In terms of domain architecture, TBDR plug spans 166-276 (SIRETPQTIT…PSAVVNVIRK (111 aa)). Residues 281-819 (EFKSHIQAGV…NATVTLRYDF (539 aa)) form the TBDR beta-barrel domain. A TonB C-terminal box motif is present at residues 802–819 (YGHYGAPRNATVTLRYDF).

The protein belongs to the TonB-dependent receptor family.

The protein resides in the cell outer membrane. Functionally, specific receptor for the siderophore ferric pyoverdine (pseudobactin) 358. This is Ferric-pyoverdine 358 receptor (pupA) from Pseudomonas putida (Arthrobacter siderocapsulatus).